The following is an 89-amino-acid chain: Small ribosomal subunit protein uS15 (89 aa).

It belongs to the universal ribosomal protein uS15 family. Part of the 30S ribosomal subunit. Forms a bridge to the 50S subunit in the 70S ribosome, contacting the 23S rRNA.

One of the primary rRNA binding proteins, it binds directly to 16S rRNA where it helps nucleate assembly of the platform of the 30S subunit by binding and bridging several RNA helices of the 16S rRNA. Its function is as follows. Forms an intersubunit bridge (bridge B4) with the 23S rRNA of the 50S subunit in the ribosome. The polypeptide is Small ribosomal subunit protein uS15 (Staphylococcus saprophyticus subsp. saprophyticus (strain ATCC 15305 / DSM 20229 / NCIMB 8711 / NCTC 7292 / S-41)).